Reading from the N-terminus, the 86-residue chain is Long neurotoxin homolog (86 aa).

The N-terminal stretch at 1 to 21 (MKTLLLTLVVVTIVCLALGYT) is a signal peptide. Cystine bridges form between Cys24-Cys45, Cys27-Cys32, Cys38-Cys63, Cys67-Cys78, and Cys79-Cys84.

The protein belongs to the three-finger toxin family. Ancestral subfamily. Orphan group II sub-subfamily. Expressed by the venom gland.

The protein resides in the secreted. Functionally, binds with low affinity and weakly inhibits muscle nicotinic acetylcholine receptor (nAChR). This Naja atra (Chinese cobra) protein is Long neurotoxin homolog.